A 387-amino-acid chain; its full sequence is Pepsin II-1 (387 aa).

The signal sequence occupies residues 1–15 (MKWLLLLGLLALSEC). A propeptide spans 16–59 (IVHKVPLVRKKSLRKNLIEKGLLQDYLKTHTPNLATKYFPKETF) (activation peptide). Positions 75–384 (YFGTISIGTP…DRANNQVGLA (310 aa)) constitute a Peptidase A1 domain. Residue Asp-93 is part of the active site. Cys-106 and Cys-111 are oxidised to a cystine. Position 129 is a phosphoserine (Ser-129). Cysteines 267 and 271 form a disulfide. The active site involves Asp-276. A disulfide bridge connects residues Cys-310 and Cys-343.

It belongs to the peptidase A1 family.

The protein resides in the secreted. The enzyme catalyses Preferential cleavage: hydrophobic, preferably aromatic, residues in P1 and P1' positions. Cleaves 1-Phe-|-Val-2, 4-Gln-|-His-5, 13-Glu-|-Ala-14, 14-Ala-|-Leu-15, 15-Leu-|-Tyr-16, 16-Tyr-|-Leu-17, 23-Gly-|-Phe-24, 24-Phe-|-Phe-25 and 25-Phe-|-Tyr-26 bonds in the B chain of insulin.. Shows particularly broad specificity; although bonds involving phenylalanine and leucine are preferred, many others are also cleaved to some extent. This is Pepsin II-1 from Oryctolagus cuniculus (Rabbit).